The primary structure comprises 468 residues: ATP synthase subunit beta (468 aa).

ATP is bound at residue 155 to 162 (GGAGVGKT).

It belongs to the ATPase alpha/beta chains family. As to quaternary structure, F-type ATPases have 2 components, CF(1) - the catalytic core - and CF(0) - the membrane proton channel. CF(1) has five subunits: alpha(3), beta(3), gamma(1), delta(1), epsilon(1). CF(0) has three main subunits: a(1), b(2) and c(9-12). The alpha and beta chains form an alternating ring which encloses part of the gamma chain. CF(1) is attached to CF(0) by a central stalk formed by the gamma and epsilon chains, while a peripheral stalk is formed by the delta and b chains.

The protein resides in the cell membrane. The enzyme catalyses ATP + H2O + 4 H(+)(in) = ADP + phosphate + 5 H(+)(out). Functionally, produces ATP from ADP in the presence of a proton gradient across the membrane. The catalytic sites are hosted primarily by the beta subunits. This chain is ATP synthase subunit beta, found in Bacillus cereus (strain ATCC 10987 / NRS 248).